The chain runs to 400 residues: Phosphoglycerate kinase (400 aa).

Residues 23-25 (DLN), Arg38, 61-64 (HFGR), Arg120, and Arg153 contribute to the substrate site. Residues Lys203, Glu325, and 355 to 358 (GGDT) contribute to the ATP site.

The protein belongs to the phosphoglycerate kinase family. In terms of assembly, monomer.

It is found in the cytoplasm. It catalyses the reaction (2R)-3-phosphoglycerate + ATP = (2R)-3-phospho-glyceroyl phosphate + ADP. It participates in carbohydrate degradation; glycolysis; pyruvate from D-glyceraldehyde 3-phosphate: step 2/5. The chain is Phosphoglycerate kinase from Methylorubrum extorquens (strain PA1) (Methylobacterium extorquens).